The sequence spans 233 residues: C-type lectin domain-containing protein 87 (233 aa).

Positions 1–19 (MRFCLLVAFILPGLFLVHA) are cleaved as a signal peptide. O-linked (Xyl...) (chondroitin sulfate) serine glycosylation is present at Ser31. A glycan (N-linked (GlcNAc...) asparagine) is linked at Asn81. A C-type lectin domain is found at 93-223 (FADSCYWIEK…CTYMLYSICE (131 aa)). Disulfide bonds link Cys114–Cys222 and Cys193–Cys214. The N-linked (GlcNAc...) asparagine glycan is linked to Asn225.

The sequence is that of C-type lectin domain-containing protein 87 from Caenorhabditis elegans.